A 489-amino-acid polypeptide reads, in one-letter code: Probable anthranilate synthase component 1 (489 aa).

L-tryptophan-binding positions include serine 54 and 262–264; that span reads PYM. Position 297 to 298 (297 to 298) interacts with chorismate; it reads GT. Glutamate 324 contributes to the Mg(2+) binding site. Phosphoserine occurs at positions 390 and 392. Residues tyrosine 412, arginine 433, 447-449, and glycine 449 each bind chorismate; that span reads GGG. Mg(2+) is bound at residue glutamate 462. Residue serine 488 is modified to Phosphoserine.

It belongs to the anthranilate synthase component I family. As to quaternary structure, tetramer of two components I and two components II. Mg(2+) serves as cofactor.

It carries out the reaction chorismate + L-glutamine = anthranilate + pyruvate + L-glutamate + H(+). Its pathway is amino-acid biosynthesis; L-tryptophan biosynthesis; L-tryptophan from chorismate: step 1/5. The polypeptide is Probable anthranilate synthase component 1 (trp3) (Schizosaccharomyces pombe (strain 972 / ATCC 24843) (Fission yeast)).